The chain runs to 300 residues: Probable protein phosphatase 2C 2 (300 aa).

A PPM-type phosphatase domain is found at 23–298 (IFAASEMQGW…DNMTTILVYL (276 aa)). Mn(2+) is bound by residues Asp57, Gly58, Asp237, and Asp289.

It belongs to the PP2C family. Mg(2+) serves as cofactor. Mn(2+) is required as a cofactor.

The protein localises to the membrane. It catalyses the reaction O-phospho-L-seryl-[protein] + H2O = L-seryl-[protein] + phosphate. The catalysed reaction is O-phospho-L-threonyl-[protein] + H2O = L-threonyl-[protein] + phosphate. Its function is as follows. Enzyme with a broad specificity. This Paramecium tetraurelia protein is Probable protein phosphatase 2C 2.